The sequence spans 324 residues: Glyoxylate/hydroxypyruvate reductase B (324 aa).

Catalysis depends on residues arginine 237 and glutamate 266. The active-site Proton donor is histidine 285.

It belongs to the D-isomer specific 2-hydroxyacid dehydrogenase family. GhrB subfamily. In terms of assembly, homodimer.

It localises to the cytoplasm. It carries out the reaction glycolate + NADP(+) = glyoxylate + NADPH + H(+). The catalysed reaction is (R)-glycerate + NAD(+) = 3-hydroxypyruvate + NADH + H(+). It catalyses the reaction (R)-glycerate + NADP(+) = 3-hydroxypyruvate + NADPH + H(+). Its function is as follows. Catalyzes the NADPH-dependent reduction of glyoxylate and hydroxypyruvate into glycolate and glycerate, respectively. This is Glyoxylate/hydroxypyruvate reductase B from Escherichia coli (strain K12 / MC4100 / BW2952).